We begin with the raw amino-acid sequence, 622 residues long: Low affinity potassium transport system protein Kup (622 aa).

The next 12 helical transmembrane spans lie at 9 to 29 (LSAI…TSPL), 49 to 69 (VFGF…IKYL), 103 to 123 (VIMG…TPAI), 137 to 157 (PELD…LFMI), 165 to 185 (VGKL…GLGL), 213 to 233 (VSFI…ALYA), 247 to 267 (WFSV…ALLL), 276 to 296 (PFFL…AALA), 337 to 357 (IYIP…IVSF), 363 to 383 (LAAA…ILST), 396 to 416 (FVAL…SANL), and 419 to 439 (LLSG…IMTT).

Belongs to the HAK/KUP transporter (TC 2.A.72) family.

The protein resides in the cell inner membrane. It catalyses the reaction K(+)(in) + H(+)(in) = K(+)(out) + H(+)(out). Functionally, responsible for the low-affinity transport of potassium into the cell. Likely operates as a K(+):H(+) symporter. This chain is Low affinity potassium transport system protein Kup, found in Citrobacter koseri (strain ATCC BAA-895 / CDC 4225-83 / SGSC4696).